The sequence spans 194 residues: Imidazoleglycerol-phosphate dehydratase (194 aa).

This sequence belongs to the imidazoleglycerol-phosphate dehydratase family.

The protein resides in the cytoplasm. It catalyses the reaction D-erythro-1-(imidazol-4-yl)glycerol 3-phosphate = 3-(imidazol-4-yl)-2-oxopropyl phosphate + H2O. It functions in the pathway amino-acid biosynthesis; L-histidine biosynthesis; L-histidine from 5-phospho-alpha-D-ribose 1-diphosphate: step 6/9. The chain is Imidazoleglycerol-phosphate dehydratase from Listeria monocytogenes serotype 4a (strain HCC23).